A 505-amino-acid polypeptide reads, in one-letter code: RNA-binding region-containing protein 3 (505 aa).

The RRM 1 domain maps to 15–90 (KTLIIRHLPR…RTLVVEFAKD (76 aa)). 4 disordered regions span residues 96-123 (ILKD…QPSV), 193-236 (PPMF…EEER), 354-374 (AQVP…SEFI), and 486-505 (ARSA…GRKH). Pro residues predominate over residues 193-214 (PPMFEMPSGPLPPPFPPENPPL). Composition is skewed to acidic residues over residues 221–235 (GSEE…DEEE) and 361–370 (EEQEEDEDIP). The 84-residue stretch at 405–488 (CRLYVKNVAK…KPLVVQFARS (84 aa)) folds into the RRM 2 domain. The span at 491–505 (PKQESADPKKGGRKH) shows a compositional bias: basic and acidic residues.

In terms of assembly, component of the U11/U12 snRNPs that are part of the U12-type spliceosome.

It localises to the nucleus. Participates in pre-mRNA U12-dependent splicing, performed by the minor spliceosome which removes U12-type introns. U12-type introns comprise less than 1% of all non-coding sequences. The polypeptide is RNA-binding region-containing protein 3 (Danio rerio (Zebrafish)).